The primary structure comprises 223 residues: TIESCTCDYKFRGDSGNDWEWGGCSDNADFGHRFGKKFVDSGEKGRDLRHAMNLHNNEAGRKTVSSEMRRECKCHGMSGSCTIETCWMRLPTFRTVGELIKERFDGASRVTMRNDGSPSDRETESSFVPYNPSHKQPASRDLVYFENSPDFCERNDKFGTPGTRGRECNATSLGVDGCDLMCCSRGSTTTEIKVKERCSCTFHWCCKVKCEECTSFRTVHRCL.

Disulfide bonds link cysteine 7–cysteine 24, cysteine 72–cysteine 86, and cysteine 74–cysteine 81. Serine 78 carries the O-palmitoleoyl serine; by PORCN lipid modification. Positions 110–135 are disordered; sequence VTMRNDGSPSDRETESSFVPYNPSHK. A compositionally biased stretch (polar residues) spans 125-135; the sequence is SSFVPYNPSHK. 6 disulfides stabilise this stretch: cysteine 152/cysteine 183, cysteine 168/cysteine 178, cysteine 182/cysteine 222, cysteine 198/cysteine 213, cysteine 200/cysteine 210, and cysteine 205/cysteine 206. Residue asparagine 169 is glycosylated (N-linked (GlcNAc...) asparagine).

It belongs to the Wnt family. In terms of processing, palmitoleoylation is required for efficient binding to frizzled receptors. Palmitoleoylation is necessary for proper trafficking to cell surface. Depalmitoleoylated by NOTUM, leading to inhibit Wnt signaling pathway.

It localises to the secreted. It is found in the extracellular space. Its subcellular location is the extracellular matrix. Functionally, ligand for members of the frizzled family of seven transmembrane receptors. Probable developmental protein. The sequence is that of Protein Wnt-1 (WNT-1) from Strongylocentrotus purpuratus (Purple sea urchin).